A 225-amino-acid chain; its full sequence is Ribonuclease HII (225 aa).

The region spanning 35 to 225 (GLVAGVDEVG…SFRPCQISLD (191 aa)) is the RNase H type-2 domain. A divalent metal cation is bound by residues Asp-41, Glu-42, and Asp-137.

This sequence belongs to the RNase HII family. Mn(2+) serves as cofactor. It depends on Mg(2+) as a cofactor.

The protein localises to the cytoplasm. The catalysed reaction is Endonucleolytic cleavage to 5'-phosphomonoester.. In terms of biological role, endonuclease that specifically degrades the RNA of RNA-DNA hybrids. This Trichormus variabilis (strain ATCC 29413 / PCC 7937) (Anabaena variabilis) protein is Ribonuclease HII.